Consider the following 160-residue polypeptide: Cytochrome b6-f complex subunit 4 (160 aa).

Helical transmembrane passes span 36 to 56, 95 to 115, and 131 to 151; these read LLYI…GLAI, LLGV…PFLE, and TVFL…TLPI.

The protein belongs to the cytochrome b family. PetD subfamily. As to quaternary structure, the 4 large subunits of the cytochrome b6-f complex are cytochrome b6, subunit IV (17 kDa polypeptide, petD), cytochrome f and the Rieske protein, while the 4 small subunits are petG, petL, petM and petN. The complex functions as a dimer.

It localises to the plastid. Its subcellular location is the chloroplast thylakoid membrane. In terms of biological role, component of the cytochrome b6-f complex, which mediates electron transfer between photosystem II (PSII) and photosystem I (PSI), cyclic electron flow around PSI, and state transitions. In Acorus calamus (Sweet flag), this protein is Cytochrome b6-f complex subunit 4.